Here is a 57-residue protein sequence, read N- to C-terminus: UPF0057 membrane protein T23F2.4 (57 aa).

2 helical membrane passes run 3-23 and 36-56; these read ITCMDIPKFLFALLLPPVGVF and ILLTILGYIPGIIYACYIILA.

Belongs to the UPF0057 (PMP3) family.

It is found in the membrane. The protein is UPF0057 membrane protein T23F2.4 of Caenorhabditis elegans.